The chain runs to 87 residues: Bradykinin-potentiating peptide NDBP12 (87 aa).

The signal sequence occupies residues 1-22 (MNKRVLLVIFFVTLLVADEVNS). The span at 64 to 75 (PAEAPAPAAAAP) shows a compositional bias: low complexity. The segment at 64-87 (PAEAPAPAAAAPEEPPVEQRRRRR) is disordered.

This sequence belongs to the non-disulfide-bridged peptide (NDBP) superfamily. Long chain multifunctional peptide (group 2) family. In terms of tissue distribution, expressed by the venom gland.

Its subcellular location is the secreted. Functionally, inhibits angiotensin-converting enzyme (ACE), but does not serve as substrate for the enzyme. Potentiates bradykinin (BK) on the isolated guinea pig ileum as well as the isolated rat uterus for contraction. Also potentiates in vivo the depressor effect of BK on arterial blood pressure in the normotensive anesthetized rat. This chain is Bradykinin-potentiating peptide NDBP12, found in Lychas mucronatus (Chinese swimming scorpion).